The sequence spans 165 residues: RNA polymerase II transcriptional coactivator KELP (165 aa).

The 58-residue stretch at Lys-3–Asp-60 folds into the DEK-C domain. Residues Glu-66 to Asp-93 form a disordered region.

The protein belongs to the transcriptional coactivator PC4 family.

It localises to the nucleus. In terms of biological role, general coactivator that functions cooperatively with TAFs and mediates functional interactions between upstream activators and the general transcriptional machinery. Binds single-stranded DNA. This chain is RNA polymerase II transcriptional coactivator KELP (KELP), found in Arabidopsis thaliana (Mouse-ear cress).